A 318-amino-acid chain; its full sequence is MFTINILLLVIPILLAVAFLTLVERKVLGYMQLRKGPNIVGPYGLLQPIADAIKLFTKEPLQPSTSSTTMFIIAPILALTLALTMWIPLPMPHPLINMNLGVLFMLAMSSLAVYSILWSGWASNSKYALIGALRAVAQTISYEVTLAIILLSVLLMNGSFTLSTLITTQEHLWLIFPSWPLAMMWFISTLAETNRAPFDLAEGESELVSGFNVEYAAGPFALFFMAEYANIIMMNAFTTILFLGAFHNPHMPELYTINFTTKTLLLTTSFLWIRASYPRFRYDQLMHLLWKNFLPLTLALCMWHVSLPITTSSIPPQT.

A run of 8 helical transmembrane segments spans residues 2–22, 70–90, 100–120, 146–166, 171–191, 222–242, 254–276, and 294–314; these read FTIN…FLTL, MFII…IPLP, LGVL…LWSG, LAII…STLI, HLWL…STLA, LFFM…TILF, LYTI…IRAS, and LPLT…TSSI.

It belongs to the complex I subunit 1 family. Core subunit of respiratory chain NADH dehydrogenase (Complex I) which is composed of 45 different subunits.

It localises to the mitochondrion inner membrane. It catalyses the reaction a ubiquinone + NADH + 5 H(+)(in) = a ubiquinol + NAD(+) + 4 H(+)(out). Core subunit of the mitochondrial membrane respiratory chain NADH dehydrogenase (Complex I) which catalyzes electron transfer from NADH through the respiratory chain, using ubiquinone as an electron acceptor. Essential for the catalytic activity and assembly of complex I. The polypeptide is NADH-ubiquinone oxidoreductase chain 1 (MT-ND1) (Ceratotherium simum (White rhinoceros)).